Here is a 430-residue protein sequence, read N- to C-terminus: Tektin-2 (430 aa).

Coiled-coil stretches lie at residues 82–160 (LTDL…QAFE) and 273–379 (EKVY…DIAC).

The protein belongs to the tektin family. In terms of assembly, microtubule inner protein component of sperm flagellar doublet microtubules. May interact with CCDC172. In terms of processing, tyrosine phosphorylated. Post-translationally, ubiquitinated, leading to its degradation. Deubiquitinated by USP16, promoting its stability.

It is found in the cytoplasm. The protein localises to the cytoskeleton. Its subcellular location is the cilium axoneme. The protein resides in the flagellum axoneme. It localises to the microtubule organizing center. Its function is as follows. Microtubule inner protein (MIP) part of the dynein-decorated doublet microtubules (DMTs) in cilia and flagellar axoneme. Plays a key role in the assembly or attachment of the inner dynein arm to microtubules in sperm flagella and tracheal cilia. Forms filamentous polymers in the walls of ciliary and flagellar microtubules. The polypeptide is Tektin-2 (TEKT2) (Macaca fascicularis (Crab-eating macaque)).